We begin with the raw amino-acid sequence, 1517 residues long: Dual oxidase 2 (1517 aa).

Positions 1–25 are cleaved as a signal peptide; that stretch reads MLPTSLKTLVLLGALLTGPLGPAGG. Residues 26–599 lie on the Extracellular side of the membrane; it reads QDAPSLPREV…YFEGSGAGYG (574 aa). A peroxidase-like; mediates peroxidase activity region spans residues 30 to 596; sequence SLPREVQRYD…VIDYFEGSGA (567 aa). N-linked (GlcNAc...) asparagine glycans are attached at residues Asn100, Asn348, Asn455, and Asn537. A disulfide bridge connects residues Cys124 and Cys1131. A helical membrane pass occupies residues 600-620; it reads VTLLAVCCFPVVSLIIAWVVA. The Cytoplasmic segment spans residues 621-1010; sequence RFRNRERKML…KRFVENYRRH (390 aa). 3 consecutive EF-hand domains span residues 819–854, 855–890, and 899–934; these read PQDM…FMKG, SPQD…FIEI, and QLAE…HDSD. Ca(2+) contacts are provided by Asp832, Asp834, Asn836, Tyr838, Glu843, Asp868, Asp870, Asn872, and Glu879. The segment at 960–1214 is interaction with TXNDC11; it reads RVSFLTRTPG…GSYALIQLPS (255 aa). Residues 1011–1031 traverse the membrane as a helical segment; it reads IVCVTIFSAICAGLFADRAYY. At 1032–1046 the chain is on the extracellular side; it reads YGFASPPTDIEETTY. The chain crosses the membrane as a helical span at residues 1047 to 1067; the sequence is VGIILSRGTAASISFMFSYIL. Residues 1053–1235 enclose the Ferric oxidoreductase domain; sequence RGTAASISFM…YVGDKLVSLS (183 aa). At 1068-1100 the chain is on the cytoplasmic side; it reads LTMCRNLITFLRETFLNRYIPFDAAVDFHRWIA. Residues 1101-1121 traverse the membrane as a helical segment; the sequence is MAAVVLAVVHSLGHAVNVYIF. Residues 1122-1154 are Extracellular-facing; sequence SVSPLSLMTCVFPSVFVNDGSKLPPKYYWWFFE. The helical transmembrane segment at 1155–1175 threads the bilayer; sequence TVPGMTGVLLLLVLAIMYVFA. The Cytoplasmic segment spans residues 1176 to 1185; that stretch reads SHHFRRHSFR. A helical membrane pass occupies residues 1186 to 1206; it reads GFWLTHHLYVVLYALIIIHGS. Position 1207 (Tyr1207) is a topological domain, extracellular. Residues 1208–1228 form a helical membrane-spanning segment; it reads ALIQLPSFHIYFLVPAIIYVG. Residues 1229-1517 are Cytoplasmic-facing; that stretch reads DKLVSLSRKK…AHFVHHYENF (289 aa). In terms of domain architecture, FAD-binding FR-type spans 1236-1342; that stretch reads RKKVEISVVK…DGPFGEGHQE (107 aa).

This sequence in the N-terminal section; belongs to the peroxidase family. Heterodimer with DUOXA2; disulfide-linked. Interacts with TXNDC11, TPO and CYBA. N-glycosylated. In terms of tissue distribution, expressed in colon, duodenum, rectum and thyroid.

It is found in the apical cell membrane. The protein resides in the cell junction. It catalyses the reaction NADH + O2 + H(+) = H2O2 + NAD(+). The catalysed reaction is NADPH + O2 + H(+) = H2O2 + NADP(+). It participates in hormone biosynthesis; thyroid hormone biosynthesis. The NADPH oxidase activity is calcium-dependent. Peroxidase activity is inhibited by aminobenzohydrazide. In terms of biological role, generates hydrogen peroxide which is required for the activity of thyroid peroxidase/TPO and lactoperoxidase/LPO. Plays a role in thyroid hormones synthesis and lactoperoxidase-mediated antimicrobial defense at the surface of mucosa. May have its own peroxidase activity through its N-terminal peroxidase-like domain. In Rattus norvegicus (Rat), this protein is Dual oxidase 2 (Duox2).